Reading from the N-terminus, the 466-residue chain is MKTGSLTQRGALLLLLLLAPAVTPTWYAGSGYSPDESYNEVYAEEVPDTRALDYRVPRWCYTLNIQDGEATCYSPRGGNYHSSLGTRCELSCDRGFRLIGRKSVQCLPSRRWSGTAYCRQMRCHTLPFITSGTYTCTNGMLLDSRCDYSCSSGYHLEGDRSRICMEDGRWSGGEPVCVDIDPPKIRCPHSREKIAEPEKLTARVYWDPPLVKDSADGTITRVTLRGPEPGSHFPEGEHVIRYTAYDRAYNRASCKFIVKVQVRRCPILKPPQHGYLTCSSAGDNYGAICEYHCDGGYERQGTPSRVCQSSRQWSGSPPVCTPMKINVNVNSAAGLLDQFYEKQRLLIVSAPDPSNRYYKMQISMLQQSTCGLDLRHVTIIELVGQPPQEVGRIREQQLSAGIIEELRQFQRLTRSYFNMVLIDKQGIDRERYMEPVTPEEIFTFIDDYLLSNQELARRAEQRDVCE.

Residues M1–P24 form the signal peptide. 3 consecutive Sushi domains span residues A70–Q120, M121–D179, and R263–P322. Intrachain disulfides connect C72/C106, C92/C118, C123/C164, and C150/C177. Positions V178–V262 constitute an HYR domain. 2 disulfides stabilise this stretch: C265–C307 and C293–C320.

In terms of assembly, forms homooligomers. Interacts with PLAUR (via the UPAR/Ly6 domains), ADAMTS4 and CTSB. Interacts with HGF; the interaction increases the mitogenic activity of HGF. Post-translationally, contains chondroitin sulfate chains.

Its subcellular location is the secreted. The protein localises to the cytoplasm. It is found in the cell surface. The protein resides in the synapse. Acts as a ligand for the urokinase plasminogen activator surface receptor. Plays a role in angiogenesis by inducing endothelial cell migration and the formation of vascular network (cords). Involved in cellular migration and adhesion. Increases the phosphorylation levels of FAK. Interacts with and increases the mitogenic activity of HGF. Promotes synapse formation. This is Sushi repeat-containing protein SRPX2 from Rattus norvegicus (Rat).